The primary structure comprises 181 residues: Isopentenyl-diphosphate Delta-isomerase (181 aa).

Positions 24 and 30 each coordinate Mn(2+). Residues leucine 28–threonine 168 enclose the Nudix hydrolase domain. Cysteine 68 is an active-site residue. Histidine 70 is a Mn(2+) binding site. Glutamate 88 lines the Mg(2+) pocket. 2 residues coordinate Mn(2+): glutamate 117 and glutamate 119. Residue glutamate 119 is part of the active site.

Belongs to the IPP isomerase type 1 family. It depends on Mg(2+) as a cofactor. Requires Mn(2+) as cofactor.

The protein localises to the cytoplasm. The enzyme catalyses isopentenyl diphosphate = dimethylallyl diphosphate. Its pathway is isoprenoid biosynthesis; dimethylallyl diphosphate biosynthesis; dimethylallyl diphosphate from isopentenyl diphosphate: step 1/1. Catalyzes the 1,3-allylic rearrangement of the homoallylic substrate isopentenyl (IPP) to its highly electrophilic allylic isomer, dimethylallyl diphosphate (DMAPP). The protein is Isopentenyl-diphosphate Delta-isomerase of Aliivibrio fischeri (strain MJ11) (Vibrio fischeri).